We begin with the raw amino-acid sequence, 236 residues long: Phosphoribosylaminoimidazole-succinocarboxamide synthase (236 aa).

The protein belongs to the SAICAR synthetase family.

The enzyme catalyses 5-amino-1-(5-phospho-D-ribosyl)imidazole-4-carboxylate + L-aspartate + ATP = (2S)-2-[5-amino-1-(5-phospho-beta-D-ribosyl)imidazole-4-carboxamido]succinate + ADP + phosphate + 2 H(+). The protein operates within purine metabolism; IMP biosynthesis via de novo pathway; 5-amino-1-(5-phospho-D-ribosyl)imidazole-4-carboxamide from 5-amino-1-(5-phospho-D-ribosyl)imidazole-4-carboxylate: step 1/2. The chain is Phosphoribosylaminoimidazole-succinocarboxamide synthase from Rickettsia akari (strain Hartford).